We begin with the raw amino-acid sequence, 279 residues long: Aspartate/glutamate leucyltransferase (279 aa).

Residues 245 to 279 are disordered; that stretch reads ARERGARPPRGPGALKDACDLPLSDAQPADIEDLD.

It belongs to the R-transferase family. Bpt subfamily.

It is found in the cytoplasm. The catalysed reaction is N-terminal L-glutamyl-[protein] + L-leucyl-tRNA(Leu) = N-terminal L-leucyl-L-glutamyl-[protein] + tRNA(Leu) + H(+). It carries out the reaction N-terminal L-aspartyl-[protein] + L-leucyl-tRNA(Leu) = N-terminal L-leucyl-L-aspartyl-[protein] + tRNA(Leu) + H(+). Functionally, functions in the N-end rule pathway of protein degradation where it conjugates Leu from its aminoacyl-tRNA to the N-termini of proteins containing an N-terminal aspartate or glutamate. The protein is Aspartate/glutamate leucyltransferase of Caulobacter vibrioides (strain ATCC 19089 / CIP 103742 / CB 15) (Caulobacter crescentus).